A 177-amino-acid chain; its full sequence is Cell division protein ZapC (177 aa).

This sequence belongs to the ZapC family. In terms of assembly, interacts directly with FtsZ.

It is found in the cytoplasm. Contributes to the efficiency of the cell division process by stabilizing the polymeric form of the cell division protein FtsZ. Acts by promoting interactions between FtsZ protofilaments and suppressing the GTPase activity of FtsZ. This is Cell division protein ZapC from Shewanella frigidimarina (strain NCIMB 400).